Consider the following 554-residue polypeptide: Nuclear division defective protein 1 (554 aa).

Disordered stretches follow at residues 1–31 and 98–117; these read MDRDISYQQNYTSTGATATSSRQPSTDNNAD and IQQQQQQQQQQQQQQQALGS. Residues 98-113 show a composition bias toward low complexity; sequence IQQQQQQQQQQQQQQQ. Thr-319 bears the Phosphothreonine; by CDC28 mark. Disordered regions lie at residues 410-475 and 493-554; these read PTPN…GKKP and SSSS…FNSQ. A compositionally biased stretch (polar residues) spans 411–427; it reads TPNCNSLHSTTTGTSAL. Positions 448 to 465 are enriched in low complexity; it reads SSSNTVSFKSKSGNNNSK. The segment covering 466–475 has biased composition (basic residues); that stretch reads GRIKKNGKKP. A compositionally biased stretch (low complexity) spans 493–513; it reads SSSSLSSSLNASSSAGNSNSN. A compositionally biased stretch (basic residues) spans 515–524; it reads TKKRASKLKR. Positions 525-536 are enriched in low complexity; it reads SQSLLSDSGSKS. The span at 539–554 shows a compositional bias: polar residues; sequence RKSCNSKSNGNLFNSQ.

In terms of assembly, forms an activator complex with FKH2. Phosphorylation of Thr-319 by CDC28 is required for the interaction with FKH2 and recruitment to promoters.

It localises to the cytoplasm. It is found in the nucleus. Functionally, transcription activator involved in G2/M transcription through its association with FKH2. This chain is Nuclear division defective protein 1 (NDD1), found in Saccharomyces cerevisiae (strain ATCC 204508 / S288c) (Baker's yeast).